The sequence spans 459 residues: uncharacterized protein (459 aa).

The segment at 28–47 is disordered; sequence AHDEELTGPPQKPAYAAKPA. One can recognise an FAD-binding PCMH-type domain in the interval 35–214; it reads GPPQKPAYAA…TEVIVKLHPR (180 aa).

Belongs to the oxygen-dependent FAD-linked oxidoreductase family. FAD serves as cofactor.

This is an uncharacterized protein from Mycobacterium tuberculosis (strain CDC 1551 / Oshkosh).